A 514-amino-acid chain; its full sequence is MPDHIYSHSFAQFLRNADNSVVNINPYPYVAFEDVFDDTFLRECLKELKSYLTAHFKETDLFKVFQTTDLANLEDCIRDAHTNVPNLIRLREHLYSPGFRGFVSTVTGTGPLDGAVDCSCNIYTSGCHLLCHDDVIGTRKISYIIYLSDPDCDWLAVDGGQLELYASDRRTVPTHTPVVSILPSWNSMVMFEVSPGRSFHAVREVSAEMKTRVSISGWFHTKERHIKRNQRETSTLDQLHSMIPATHAEWAVLHVNRVLSPSYSLVQDLTKWINPEYLRSESVKRVRQVFEADGSVQLFNFLLPHIAEPIKRKLNREDCRNSRHRCMYDHGYGDSWVVQGPPHVQRYLSYQPLECTLANKRSNSGELLKKLMCDLFESSSFQNWVRAVTGSVCDLAHSEVRRFRPGFDYTLAHAGTKRCSSEIDVTLCLTSGPNPAEWLSGDLGGFKCFIPIGSKSDRADVYEEIGEEQNMRSVTPSFNCLSLVKVNTGIGDFVKYVSTSAKSSRWDIVCRYST.

The 108-residue stretch at 114-221 folds into the Fe2OG dioxygenase domain; it reads GAVDCSCNIY…RVSISGWFHT (108 aa). Residues His-132 and Asp-134 each contribute to the Fe cation site. A 2-oxoglutarate-binding site is contributed by Tyr-146. Residue His-200 participates in Fe cation binding. Arg-212 is a binding site for 2-oxoglutarate.

It belongs to the TPA1 family. As to quaternary structure, monomer and homodimer. The cofactor is Fe(2+). Requires L-ascorbate as cofactor.

It carries out the reaction [ribosomal protein uS12]-L-proline + 2-oxoglutarate + O2 = [ribosomal protein uS12]-(3S)-3-hydroxy-L-proline + succinate + CO2. It catalyses the reaction [ribosomal protein uS12]-(3S)-3-hydroxy-L-proline + 2-oxoglutarate + O2 = [ribosomal protein uS12]-(3S)-3,4-dihydroxy-L-proline + succinate + CO2. Its function is as follows. Prolyl 3,4-dihydroxylase that catalyzes 3,4-dihydroxylation of 'Pro-61' of small ribosomal subunit uS12 (RPS23), thereby regulating protein translation termination efficiency. The polypeptide is Prolyl 3,4-dihydroxylase OGFOD1 (Ogd) (Ostreococcus tauri).